The chain runs to 829 residues: Periplasmic nitrate reductase (829 aa).

Positions 1-30 (MKLSRRDFMKANAVAAAAAVAGVSAPTLAA) form a signal peptide, tat-type signal. In terms of domain architecture, 4Fe-4S Mo/W bis-MGD-type spans 41–97 (ITWDKAPCRFCGTGCSVLVGSQDGRVVATQGDPDAPVNRGLNCIKGYFLSKIMYGQD). [4Fe-4S] cluster is bound by residues Cys-48, Cys-51, Cys-55, and Cys-83. Mo-bis(molybdopterin guanine dinucleotide) contacts are provided by residues Lys-85, Gln-152, Asn-177, Cys-181, 214–221 (WGSNMAEM), 245–249 (STFEH), 264–266 (QTD), Met-374, Gln-378, Asn-484, 510–511 (SD), Lys-533, Asp-560, and 719–728 (TGRVLEHWHT). Position 795 (Phe-795) interacts with substrate. The Mo-bis(molybdopterin guanine dinucleotide) site is built by Asn-803 and Lys-820.

The protein belongs to the prokaryotic molybdopterin-containing oxidoreductase family. NasA/NapA/NarB subfamily. In terms of assembly, component of the periplasmic nitrate reductase NapAB complex composed of NapA and NapB. The cofactor is [4Fe-4S] cluster. It depends on Mo-bis(molybdopterin guanine dinucleotide) as a cofactor. In terms of processing, predicted to be exported by the Tat system. The position of the signal peptide cleavage has not been experimentally proven.

The protein resides in the periplasm. It catalyses the reaction 2 Fe(II)-[cytochrome] + nitrate + 2 H(+) = 2 Fe(III)-[cytochrome] + nitrite + H2O. Its function is as follows. Catalytic subunit of the periplasmic nitrate reductase complex NapAB. Receives electrons from NapB and catalyzes the reduction of nitrate to nitrite. This Aeromonas hydrophila subsp. hydrophila (strain ATCC 7966 / DSM 30187 / BCRC 13018 / CCUG 14551 / JCM 1027 / KCTC 2358 / NCIMB 9240 / NCTC 8049) protein is Periplasmic nitrate reductase.